Here is a 214-residue protein sequence, read N- to C-terminus: Dynein axonemal assembly factor 6 (214 aa).

Disordered stretches follow at residues 1 to 22 (MESENMDSENMKTENMESQNVD) and 34 to 68 (ALSKLLNPEEEDDSDYGQTNGLSTIGAMGPGNIGP).

This sequence belongs to the PIH1 family. As to quaternary structure, interacts with HSPA1A/B and HSP90AA1. Interacts with DNAAF2 and DNAAF4. Interacts wuth DNAI2. As to expression, expressed in testis, small intestine, prostate, adrenal gland, spleen, lung, bladder, breast and ovary. Expressed in ciliated epithelial cells.

Its subcellular location is the cytoplasm. The protein localises to the golgi apparatus. The protein resides in the trans-Golgi network. In terms of biological role, plays a role in cytoplasmic pre-assembly of axonemal dynein. The polypeptide is Dynein axonemal assembly factor 6 (Homo sapiens (Human)).